Reading from the N-terminus, the 197-residue chain is Putative methyltransferase Mtx subunit A (197 aa).

This sequence belongs to the MtrA family. In terms of assembly, may be part of a complex composed of 3 subunits; MtxA, MtxH and MtxX.

This is Putative methyltransferase Mtx subunit A (mtxA) from Methanosarcina barkeri (strain Fusaro / DSM 804).